A 358-amino-acid chain; its full sequence is Low-specificity L-threonine aldolase 1 (358 aa).

Lysine 207 carries the N6-(pyridoxal phosphate)lysine modification.

Belongs to the threonine aldolase family. It depends on pyridoxal 5'-phosphate as a cofactor. Expressed in root tips, seedlings, carpels and seeds.

It catalyses the reaction L-threonine = acetaldehyde + glycine. The catalysed reaction is L-allo-threonine = acetaldehyde + glycine. The protein operates within amino-acid degradation; L-threonine degradation via aldolase pathway; acetaldehyde and glycine from L-threonine: step 1/1. Its function is as follows. Threonine aldolase involved in threonine degradation to glycine. May play a role in the removal of L-allo-threonine. This is Low-specificity L-threonine aldolase 1 from Arabidopsis thaliana (Mouse-ear cress).